The following is an 883-amino-acid chain: Phosphoenolpyruvate carboxylase (883 aa).

Catalysis depends on residues histidine 138 and lysine 546.

The protein belongs to the PEPCase type 1 family. Requires Mg(2+) as cofactor.

It catalyses the reaction oxaloacetate + phosphate = phosphoenolpyruvate + hydrogencarbonate. Functionally, forms oxaloacetate, a four-carbon dicarboxylic acid source for the tricarboxylic acid cycle. The polypeptide is Phosphoenolpyruvate carboxylase (Erwinia tasmaniensis (strain DSM 17950 / CFBP 7177 / CIP 109463 / NCPPB 4357 / Et1/99)).